The following is a 1009-amino-acid chain: Type VII secretion system accessory factor EsaA (1009 aa).

6 helical membrane passes run Ile-7–Val-27, Ile-822–Phe-842, Val-869–Ile-889, Lys-903–Leu-923, Ser-928–Leu-948, and Ile-979–Phe-999.

It belongs to the EsaA family. Homodimer. Interacts with EssB.

It is found in the cell membrane. Functionally, component of the type VII secretion system (Ess). Provides together with EssB and other components such as EssC and EssE a secretion platform across the cytoplasmic membrane in the host. The chain is Type VII secretion system accessory factor EsaA from Staphylococcus aureus (strain Mu50 / ATCC 700699).